A 52-amino-acid polypeptide reads, in one-letter code: Large ribosomal subunit protein bL33 (52 aa).

Belongs to the bacterial ribosomal protein bL33 family.

The polypeptide is Large ribosomal subunit protein bL33 (Chlamydia trachomatis serovar A (strain ATCC VR-571B / DSM 19440 / HAR-13)).